We begin with the raw amino-acid sequence, 218 residues long: Adenylate kinase (218 aa).

10–15 (GVGKGT) serves as a coordination point for ATP. The tract at residues 30-59 (STGDMLRSAIKQGTELGLKAKSFIDKGELV) is NMP. AMP-binding positions include Thr-31, Arg-36, 57–59 (ELV), 86–89 (GFPR), and Gln-93. Residues 127-164 (GRRIAPSTGKVYHVVYNPPKVEGKCDETGEDLIIREDD) form an LID region. Residues Arg-128 and 137–138 (VY) each bind ATP. Arg-161 and Arg-172 together coordinate AMP. Gln-200 contacts ATP.

Belongs to the adenylate kinase family. In terms of assembly, monomer.

The protein localises to the cytoplasm. It catalyses the reaction AMP + ATP = 2 ADP. It participates in purine metabolism; AMP biosynthesis via salvage pathway; AMP from ADP: step 1/1. Its function is as follows. Catalyzes the reversible transfer of the terminal phosphate group between ATP and AMP. Plays an important role in cellular energy homeostasis and in adenine nucleotide metabolism. The chain is Adenylate kinase from Chloroherpeton thalassium (strain ATCC 35110 / GB-78).